A 62-amino-acid polypeptide reads, in one-letter code: Short neurotoxin C (62 aa).

The span at 1-16 (RRCFNQQSSQPQTNKS) shows a compositional bias: polar residues. A disordered region spans residues 1-21 (RRCFNQQSSQPQTNKSCPPGE). 4 cysteine pairs are disulfide-bonded: cysteine 3/cysteine 24, cysteine 17/cysteine 41, cysteine 43/cysteine 54, and cysteine 55/cysteine 60.

It belongs to the three-finger toxin family. Short-chain subfamily. Type I alpha-neurotoxin sub-subfamily. Expressed by the venom gland.

It localises to the secreted. In terms of biological role, binds to muscle nicotinic acetylcholine receptor (nAChR) and inhibit acetylcholine from binding to the receptor, thereby impairing neuromuscular transmission. The chain is Short neurotoxin C from Laticauda crockeri (Crocker's sea snake).